Here is a 190-residue protein sequence, read N- to C-terminus: Probable RNA-binding protein 18 (190 aa).

The RRM domain occupies 25-106; sequence HRLWIGNLDP…KKLVVRWAHA (82 aa). Residues 166 to 190 form a disordered region; that stretch reads VYSYFKPPDKKRTTPYSRTAWKSRR.

In Mus musculus (Mouse), this protein is Probable RNA-binding protein 18 (Rbm18).